We begin with the raw amino-acid sequence, 232 residues long: Orotidine 5'-phosphate decarboxylase (232 aa).

Substrate is bound by residues D13, K35, 62 to 71 (DLKFHDIPNT), T121, R182, Q191, G211, and R212. K64 serves as the catalytic Proton donor.

The protein belongs to the OMP decarboxylase family. Type 1 subfamily. Homodimer.

The enzyme catalyses orotidine 5'-phosphate + H(+) = UMP + CO2. The protein operates within pyrimidine metabolism; UMP biosynthesis via de novo pathway; UMP from orotate: step 2/2. Its function is as follows. Catalyzes the decarboxylation of orotidine 5'-monophosphate (OMP) to uridine 5'-monophosphate (UMP). The chain is Orotidine 5'-phosphate decarboxylase from Teredinibacter turnerae (strain ATCC 39867 / T7901).